The primary structure comprises 197 residues: Xanthine phosphoribosyltransferase (197 aa).

Positions 20 and 27 each coordinate xanthine. 128 to 132 provides a ligand contact to 5-phospho-alpha-D-ribose 1-diphosphate; the sequence is ANGQA. K156 is a binding site for xanthine.

This sequence belongs to the purine/pyrimidine phosphoribosyltransferase family. Xpt subfamily. In terms of assembly, homodimer.

It is found in the cytoplasm. It catalyses the reaction XMP + diphosphate = xanthine + 5-phospho-alpha-D-ribose 1-diphosphate. The protein operates within purine metabolism; XMP biosynthesis via salvage pathway; XMP from xanthine: step 1/1. In terms of biological role, converts the preformed base xanthine, a product of nucleic acid breakdown, to xanthosine 5'-monophosphate (XMP), so it can be reused for RNA or DNA synthesis. In Lactococcus lactis subsp. cremoris (strain MG1363), this protein is Xanthine phosphoribosyltransferase.